A 1523-amino-acid polypeptide reads, in one-letter code: uncharacterized protein (1523 aa).

The tract at residues 1–89 (MLPTSSNNEE…GSSNMNPYDR (89 aa)) is disordered. Position 993–1000 (993–1000 (SPFGCGKS)) interacts with ATP. 2 stretches are compositionally biased toward polar residues: residues 1463-1476 (TSRQ…NEYN) and 1485-1498 (QSNN…SVTN). The interval 1463–1498 (TSRQSKQQRANEYNSQHKHVKRQSNNDYGSQRSVTN) is disordered.

Belongs to the DNA2/NAM7 helicase family.

This is an uncharacterized protein from Caenorhabditis elegans.